The chain runs to 667 residues: DNA ligase (667 aa).

NAD(+)-binding positions include Asp-32–Asp-36 and Ser-80–Leu-81. The active-site N6-AMP-lysine intermediate is the Lys-121. The NAD(+) site is built by Arg-143, Glu-178, and Lys-314. Positions 407, 410, 423, and 429 each coordinate Zn(2+). In terms of domain architecture, BRCT spans Ile-587 to Ser-667.

Belongs to the NAD-dependent DNA ligase family. LigA subfamily. The cofactor is Mg(2+). Mn(2+) serves as cofactor.

The enzyme catalyses NAD(+) + (deoxyribonucleotide)n-3'-hydroxyl + 5'-phospho-(deoxyribonucleotide)m = (deoxyribonucleotide)n+m + AMP + beta-nicotinamide D-nucleotide.. Functionally, DNA ligase that catalyzes the formation of phosphodiester linkages between 5'-phosphoryl and 3'-hydroxyl groups in double-stranded DNA using NAD as a coenzyme and as the energy source for the reaction. It is essential for DNA replication and repair of damaged DNA. The chain is DNA ligase from Clostridium botulinum (strain Eklund 17B / Type B).